The sequence spans 238 residues: Ribonuclease HII (238 aa).

Residues 23–215 enclose the RNase H type-2 domain; sequence QRLCGVDEAG…VREALARLPM (193 aa). A divalent metal cation is bound by residues D29, E30, and D124.

Belongs to the RNase HII family. Requires Mn(2+) as cofactor. Mg(2+) serves as cofactor.

It localises to the cytoplasm. It carries out the reaction Endonucleolytic cleavage to 5'-phosphomonoester.. Endonuclease that specifically degrades the RNA of RNA-DNA hybrids. The polypeptide is Ribonuclease HII (Cupriavidus necator (strain ATCC 17699 / DSM 428 / KCTC 22496 / NCIMB 10442 / H16 / Stanier 337) (Ralstonia eutropha)).